We begin with the raw amino-acid sequence, 270 residues long: Regulatory protein RecX (270 aa).

Belongs to the RecX family.

Its subcellular location is the cytoplasm. Modulates RecA activity. In Bacillus cereus (strain AH187), this protein is Regulatory protein RecX.